The following is a 360-amino-acid chain: Phospho-N-acetylmuramoyl-pentapeptide-transferase (360 aa).

A run of 10 helical transmembrane segments spans residues Y21–G41, M74–G94, Y97–Y117, Y134–S154, V168–S188, G199–S219, S236–F256, V263–L283, I288–V308, and V338–K358.

The protein belongs to the glycosyltransferase 4 family. MraY subfamily. Requires Mg(2+) as cofactor.

The protein resides in the cell inner membrane. It catalyses the reaction UDP-N-acetyl-alpha-D-muramoyl-L-alanyl-gamma-D-glutamyl-meso-2,6-diaminopimeloyl-D-alanyl-D-alanine + di-trans,octa-cis-undecaprenyl phosphate = di-trans,octa-cis-undecaprenyl diphospho-N-acetyl-alpha-D-muramoyl-L-alanyl-D-glutamyl-meso-2,6-diaminopimeloyl-D-alanyl-D-alanine + UMP. The protein operates within cell wall biogenesis; peptidoglycan biosynthesis. In terms of biological role, catalyzes the initial step of the lipid cycle reactions in the biosynthesis of the cell wall peptidoglycan: transfers peptidoglycan precursor phospho-MurNAc-pentapeptide from UDP-MurNAc-pentapeptide onto the lipid carrier undecaprenyl phosphate, yielding undecaprenyl-pyrophosphoryl-MurNAc-pentapeptide, known as lipid I. In Shewanella loihica (strain ATCC BAA-1088 / PV-4), this protein is Phospho-N-acetylmuramoyl-pentapeptide-transferase.